The sequence spans 135 residues: Large ribosomal subunit protein bL21 (135 aa).

The span at 109-128 (TLATAQSAPPSTSEATTDTT) shows a compositional bias: polar residues. Positions 109–135 (TLATAQSAPPSTSEATTDTTGIPAAEE) are disordered.

This sequence belongs to the bacterial ribosomal protein bL21 family. Part of the 50S ribosomal subunit. Contacts protein L20.

Functionally, this protein binds to 23S rRNA in the presence of protein L20. This is Large ribosomal subunit protein bL21 from Synechococcus sp. (strain JA-3-3Ab) (Cyanobacteria bacterium Yellowstone A-Prime).